The chain runs to 134 residues: ATP synthase epsilon chain, chloroplastic (134 aa).

Belongs to the ATPase epsilon chain family. In terms of assembly, F-type ATPases have 2 components, CF(1) - the catalytic core - and CF(0) - the membrane proton channel. CF(1) has five subunits: alpha(3), beta(3), gamma(1), delta(1), epsilon(1). CF(0) has three main subunits: a, b and c.

It localises to the plastid. Its subcellular location is the chloroplast thylakoid membrane. Functionally, produces ATP from ADP in the presence of a proton gradient across the membrane. The protein is ATP synthase epsilon chain, chloroplastic of Porphyra purpurea (Red seaweed).